A 129-amino-acid polypeptide reads, in one-letter code: Small ribosomal subunit protein uS11 (129 aa).

Belongs to the universal ribosomal protein uS11 family. Part of the 30S ribosomal subunit. Interacts with proteins S7 and S18. Binds to IF-3.

Located on the platform of the 30S subunit, it bridges several disparate RNA helices of the 16S rRNA. Forms part of the Shine-Dalgarno cleft in the 70S ribosome. The sequence is that of Small ribosomal subunit protein uS11 from Symbiobacterium thermophilum (strain DSM 24528 / JCM 14929 / IAM 14863 / T).